Consider the following 316-residue polypeptide: N-acetylmuramic acid 6-phosphate etherase (316 aa).

Positions 1-23 (MAGFDPTLQPSDDRGHLLTEQSN) are disordered. Residues 66–229 (ISKRLSSGGR…STTVMVRLGK (164 aa)) form the SIS domain. The active-site Proton donor is the Glu94. Glu125 is a catalytic residue.

This sequence belongs to the GCKR-like family. MurNAc-6-P etherase subfamily. Homodimer.

The enzyme catalyses N-acetyl-D-muramate 6-phosphate + H2O = N-acetyl-D-glucosamine 6-phosphate + (R)-lactate. It participates in amino-sugar metabolism; N-acetylmuramate degradation. Its function is as follows. Specifically catalyzes the cleavage of the D-lactyl ether substituent of MurNAc 6-phosphate, producing GlcNAc 6-phosphate and D-lactate. The protein is N-acetylmuramic acid 6-phosphate etherase of Synechococcus sp. (strain CC9902).